We begin with the raw amino-acid sequence, 148 residues long: Protoporphyrinogen IX oxidase (148 aa).

Transmembrane regions (helical) follow at residues 7–27, 58–78, 86–106, and 128–148; these read YFLW…AALF, SFIA…MLLI, GGWL…HFYC, and FNEA…VKPF. Residue histidine 15 coordinates heme. Lysine 92 contacts heme.

Belongs to the HemJ family. In terms of assembly, homodimer. The cofactor is heme b.

It localises to the cell membrane. It carries out the reaction protoporphyrinogen IX + 3 A = protoporphyrin IX + 3 AH2. It participates in porphyrin-containing compound metabolism; protoporphyrin-IX biosynthesis; protoporphyrin-IX from protoporphyrinogen-IX: step 1/1. Catalyzes the oxidation of protoporphyrinogen IX to protoporphyrin IX. Is involved in the biosynthesis of tetrapyrrole molecules like heme. Does not use oxygen or artificial electron acceptors such as menadione or benzoquinone. The chain is Protoporphyrinogen IX oxidase from Helicobacter pylori (strain ATCC 700392 / 26695) (Campylobacter pylori).